The sequence spans 445 residues: Sodium/proton-dependent alanine carrier protein (445 aa).

The next 9 helical transmembrane spans lie at 41-61, 103-123, 129-149, 159-179, 188-208, 249-269, 304-324, 349-369, and 375-395; these read IAYG…IGAA, AAII…SIAD, FGIP…FTIF, AEIV…AIIA, VFGL…GILG, AFSI…MILF, TLFP…FAFT, AFFA…VKTA, and MGDI…LLLF.

Belongs to the alanine or glycine:cation symporter (AGCS) (TC 2.A.25) family. In terms of processing, the N-terminus is blocked.

It localises to the cell membrane. Its function is as follows. Mediates the active transport of alanine, driven by either an H(+) or Na(+) gradient. The protein is Sodium/proton-dependent alanine carrier protein of Bacillus sp. (strain PS3).